The following is a 100-amino-acid chain: UPF0213 protein YhbQ (100 aa).

In terms of domain architecture, GIY-YIG spans 2-77 (TPWFLYLIRT…KQLTKRQKER (76 aa)).

It belongs to the UPF0213 family.

This chain is UPF0213 protein YhbQ, found in Escherichia coli O17:K52:H18 (strain UMN026 / ExPEC).